Here is a 496-residue protein sequence, read N- to C-terminus: Lysine--tRNA ligase (496 aa).

Mg(2+) contacts are provided by Glu405 and Glu412.

Belongs to the class-II aminoacyl-tRNA synthetase family. As to quaternary structure, homodimer. It depends on Mg(2+) as a cofactor.

The protein localises to the cytoplasm. The enzyme catalyses tRNA(Lys) + L-lysine + ATP = L-lysyl-tRNA(Lys) + AMP + diphosphate. In Vesicomyosocius okutanii subsp. Calyptogena okutanii (strain HA), this protein is Lysine--tRNA ligase.